The chain runs to 343 residues: Large ribosomal subunit protein uL3 (343 aa).

Disordered regions lie at residues 1-31 (MGHR…TPRS) and 238-262 (KGSR…PGQM).

It belongs to the universal ribosomal protein uL3 family. Part of the 50S ribosomal subunit. Forms a cluster with proteins L14 and L24e.

Functionally, one of the primary rRNA binding proteins, it binds directly near the 3'-end of the 23S rRNA, where it nucleates assembly of the 50S subunit. The protein is Large ribosomal subunit protein uL3 of Sulfurisphaera tokodaii (strain DSM 16993 / JCM 10545 / NBRC 100140 / 7) (Sulfolobus tokodaii).